The primary structure comprises 45 residues: Bacteriocin fulvocin-C (45 aa).

Functionally, bacteriocin. This chain is Bacteriocin fulvocin-C, found in Myxococcus fulvus.